The sequence spans 569 residues: Protein THEMIS3 (569 aa).

CABIT stretches follow at residues 1 to 254 (MEQT…ARLD) and 255 to 523 (RKPR…EERS).

It belongs to the themis family. Specifically expressed in the intestine.

The polypeptide is Protein THEMIS3 (Themis3) (Mus musculus (Mouse)).